The chain runs to 801 residues: MLVSYKWLKELVDVDVTTAELAEKMSTTGIEVEGVETPAEGLSKLVVGHIVSCEDVPDTHLHLCQVDTGDDELRQVVCGAPNVKTGINVIVAVPGARIADNYKIKKGKIRGMESLGMICSLQELGLSESIIPKEFSDGIQILPEGAIPGDSIFSYLDLDDEIIELSITPNRADALSMRGVAHEVAAIYGKKVHFEEKNLIEEAERAADKISVVIESDKVLSYSARIVKNVTVAPSPQWLQNKLMNAGIRPINNVVDVTNYVLLTYGQPMHAFDFDKFDGTTIVARNAENGEKLITLDGEERDLIADDLVIAVNDQPVALAGVMGGQSTEIGSSSKTVVLEAAVFNGTSIRKTSGRLNLRSESSSRFEKGINYDTVSEAMDFAAAMLQELAGGQVLSGQVTEGVLPTEPVEVSTTLGYVNTRLGTELTYTDIEEVFEKLGFAISGSEVKFTVLVPRRRWDIAIQADLVEEIARIYGYEKLPTTLPEAGATAGELTSMQRLRRRVRTVAEGAGLSEIITYALTTPEKAVQFSTQATNITELMWPMTVDRSALRQNVVSGMLDTIAYNVARKNSNLAVYEIGKVFEQTGNPKEDLPTEVETFTFALTGLVEEKDFQTKSKPVDFFYAKGIVEALFIKLKLDVTFVAQKGLASMHPGRTATILLDGKEIGFVGQVHPQTAKQYDIPETYVAEINLSTIESQMNQALIFEDITKYPSVSRDIALLLAESVSHHDIVSAIETSGVKRLTAIKLFDVYAGNNIAEGYKSMAYSLTFQNPNDNLTDEEVAKYMEKITKSLVEKVNAEIR.

Residues 39 to 153 (AEGLSKLVVG…EGAIPGDSIF (115 aa)) form the tRNA-binding domain. Positions 406 to 481 (TEPVEVSTTL…RIYGYEKLPT (76 aa)) constitute a B5 domain. 4 residues coordinate Mg(2+): aspartate 459, aspartate 465, glutamate 468, and glutamate 469. The FDX-ACB domain occupies 708-801 (TKYPSVSRDI…LVEKVNAEIR (94 aa)).

Belongs to the phenylalanyl-tRNA synthetase beta subunit family. Type 1 subfamily. As to quaternary structure, tetramer of two alpha and two beta subunits. Requires Mg(2+) as cofactor.

The protein resides in the cytoplasm. It catalyses the reaction tRNA(Phe) + L-phenylalanine + ATP = L-phenylalanyl-tRNA(Phe) + AMP + diphosphate + H(+). This chain is Phenylalanine--tRNA ligase beta subunit, found in Streptococcus agalactiae serotype V (strain ATCC BAA-611 / 2603 V/R).